A 147-amino-acid chain; its full sequence is Peroxynitrite isomerase (147 aa).

A heme b-binding site is contributed by H137.

Belongs to the nitrobindin family. In terms of assembly, homodimer. Requires heme b as cofactor.

The catalysed reaction is peroxynitrite = nitrate. Its pathway is nitrogen metabolism. Functionally, heme-binding protein able to scavenge peroxynitrite and to protect free L-tyrosine against peroxynitrite-mediated nitration, by acting as a peroxynitrite isomerase that converts peroxynitrite to nitrate. Therefore, this protein likely plays a role in peroxynitrite sensing and in the detoxification of reactive nitrogen and oxygen species (RNS and ROS, respectively). Is able to bind nitric oxide (NO) in vitro, but may act as a sensor of peroxynitrite levels in vivo. The polypeptide is Peroxynitrite isomerase (Frankia alni (strain DSM 45986 / CECT 9034 / ACN14a)).